We begin with the raw amino-acid sequence, 181 residues long: 3-hexulose-6-phosphate isomerase (181 aa).

Residues 27 to 168 enclose the SIS domain; that stretch reads ILSLVDAAGR…IAKLVDQKGL (142 aa). Substrate-binding positions include S45 and 84-89; that span reads SGSGST. E148 functions as the Proton acceptor in the catalytic mechanism.

The protein belongs to the SIS family. PHI subfamily. In terms of assembly, homodimer.

It carries out the reaction D-arabino-hex-3-ulose 6-phosphate = beta-D-fructose 6-phosphate. The protein operates within one-carbon metabolism; formaldehyde assimilation via RuMP pathway; D-fructose 6-phosphate from D-ribulose 5-phosphate and formaldehyde: step 2/2. Catalyzes the isomerization between 3-hexulose 6-phosphate and fructose 6-phosphate. This chain is 3-hexulose-6-phosphate isomerase (rmpB), found in Methylomonas aminofaciens.